The chain runs to 267 residues: 5'-nucleotidase SurE (267 aa).

A divalent metal cation-binding residues include Asp9, Asp10, Ser40, and Asn97.

The protein belongs to the SurE nucleotidase family. It depends on a divalent metal cation as a cofactor.

It localises to the cytoplasm. The catalysed reaction is a ribonucleoside 5'-phosphate + H2O = a ribonucleoside + phosphate. Functionally, nucleotidase that shows phosphatase activity on nucleoside 5'-monophosphates. In Helicobacter pylori (strain G27), this protein is 5'-nucleotidase SurE.